The following is a 514-amino-acid chain: MTDKLIIFDTTLRDGEQSPGASMTKEEKIRIAKHLERMKVDVIEAGFAASSNGDFDAIHTIAGLVKDSTICSLARANDKDIQRAADALKPASSARIHTFIATSPLHMEKKLRMTPDQVFEQARLAVRFARKFTDNVEFSPEDGSRSDLDFLCRVLEAVIAEGATTINIADTVGYGVPELYGNLVKTLRERIPNSDKAIFSVHCHNDLGMAVANSLAGVKIGGARQVECTINGLGERAGNTSLEEIVMAVKTRKDYFGLDVGIDTTQIVPTSKLVSQITGFVVQPNKAVVGANAFAHASGIHQDGVLKARDTYEIMRAEDVGWTANKIVLGKLSGRNAFKQRLQELGVSLDSEAELNAAFMRFKDLADRKAEIFDEDIIAIVSEESALAQEQEHVKFVSLSQHSETGEQPQAKVVFAVEGSEVTGEARGNGPVDATFNAIEGEVGSGSELLLYSVNAITTGTQAQGEVTVRLSKNGRIVNGVGTDPDIVAASAKAYIAALNKLHSKDDKLNPQRA.

One can recognise a Pyruvate carboxyltransferase domain in the interval 5 to 268 (LIIFDTTLRD…DVGIDTTQIV (264 aa)). 4 residues coordinate Mn(2+): aspartate 14, histidine 202, histidine 204, and asparagine 239. Positions 395–514 (KFVSLSQHSE…KDDKLNPQRA (120 aa)) are regulatory domain.

Belongs to the alpha-IPM synthase/homocitrate synthase family. LeuA type 1 subfamily. In terms of assembly, homodimer. It depends on Mn(2+) as a cofactor.

Its subcellular location is the cytoplasm. It carries out the reaction 3-methyl-2-oxobutanoate + acetyl-CoA + H2O = (2S)-2-isopropylmalate + CoA + H(+). Its pathway is amino-acid biosynthesis; L-leucine biosynthesis; L-leucine from 3-methyl-2-oxobutanoate: step 1/4. Its function is as follows. Catalyzes the condensation of the acetyl group of acetyl-CoA with 3-methyl-2-oxobutanoate (2-ketoisovalerate) to form 3-carboxy-3-hydroxy-4-methylpentanoate (2-isopropylmalate). This Burkholderia vietnamiensis (strain G4 / LMG 22486) (Burkholderia cepacia (strain R1808)) protein is 2-isopropylmalate synthase.